The chain runs to 318 residues: L-lactate dehydrogenase (318 aa).

Residues Val20, Asp41, Lys46, Tyr71, and 85-86 (GA) each bind NAD(+). Substrate is bound by residues Gln88, Arg94, and 126–129 (NPVD). NAD(+) contacts are provided by residues 124-126 (ATN) and Ser149. Residue 154-157 (DTAR) participates in substrate binding. 2 residues coordinate beta-D-fructose 1,6-bisphosphate: Arg159 and His174. His181 acts as the Proton acceptor in catalysis. Phosphotyrosine is present on Tyr226. Substrate is bound at residue Thr235.

It belongs to the LDH/MDH superfamily. LDH family. As to quaternary structure, homotetramer.

The protein localises to the cytoplasm. The catalysed reaction is (S)-lactate + NAD(+) = pyruvate + NADH + H(+). The protein operates within fermentation; pyruvate fermentation to lactate; (S)-lactate from pyruvate: step 1/1. Allosterically activated by fructose 1,6-bisphosphate (FBP). In terms of biological role, catalyzes the conversion of lactate to pyruvate. This is L-lactate dehydrogenase from Priestia megaterium (Bacillus megaterium).